A 121-amino-acid chain; its full sequence is Large ribosomal subunit protein uL24 (121 aa).

It belongs to the universal ribosomal protein uL24 family. Part of the 50S ribosomal subunit.

Its function is as follows. One of two assembly initiator proteins, it binds directly to the 5'-end of the 23S rRNA, where it nucleates assembly of the 50S subunit. Located at the polypeptide exit tunnel on the outside of the subunit. This is Large ribosomal subunit protein uL24 from Methanocorpusculum labreanum (strain ATCC 43576 / DSM 4855 / Z).